Consider the following 433-residue polypeptide: CinA-like protein (433 aa).

It belongs to the CinA family.

This Frankia casuarinae (strain DSM 45818 / CECT 9043 / HFP020203 / CcI3) protein is CinA-like protein.